Reading from the N-terminus, the 493-residue chain is Glutamyl-tRNA(Gln) amidotransferase subunit A (493 aa).

Catalysis depends on charge relay system residues K79 and S159. S183 serves as the catalytic Acyl-ester intermediate.

The protein belongs to the amidase family. GatA subfamily. In terms of assembly, heterotrimer of A, B and C subunits.

The catalysed reaction is L-glutamyl-tRNA(Gln) + L-glutamine + ATP + H2O = L-glutaminyl-tRNA(Gln) + L-glutamate + ADP + phosphate + H(+). Allows the formation of correctly charged Gln-tRNA(Gln) through the transamidation of misacylated Glu-tRNA(Gln) in organisms which lack glutaminyl-tRNA synthetase. The reaction takes place in the presence of glutamine and ATP through an activated gamma-phospho-Glu-tRNA(Gln). This Rhizobium leguminosarum bv. trifolii (strain WSM2304) protein is Glutamyl-tRNA(Gln) amidotransferase subunit A.